The primary structure comprises 101 residues: Osteocalcin (101 aa).

A signal peptide spans 1–19; the sequence is MKLAILTVLLLGAAVLCLG. A propeptide spanning residues 20–52 is cleaved from the precursor; it reads SKDADHSNSVGESHSSEAFISRQESASFARLKR. Residues 53-99 form the Gla domain; it reads SYGNNVGQGAAVGSPLESQREVCELNPDCDELADHIGFQEAYRRFYG. The Ca(2+) site is built by E69, E73, E76, and D82. 3 positions are modified to 4-carboxyglutamate: E69, E73, and E76. A disulfide bond links C75 and C81.

The protein belongs to the osteocalcin/matrix Gla protein family. Post-translationally, gamma-carboxyglutamate residues are formed by vitamin K dependent carboxylation by GGCX. These residues are essential for the binding of calcium.

It localises to the secreted. In terms of biological role, the carboxylated form is one of the main organic components of the bone matrix, which constitutes 1-2% of the total bone protein. The carboxylated form binds strongly to apatite and calcium. In Xenopus laevis (African clawed frog), this protein is Osteocalcin (bglap).